The sequence spans 173 residues: Photosystem I assembly protein Ycf3 (173 aa).

3 TPR repeats span residues 35–68 (AYIYYRDGLAAQNNGDYSEALEYYKESLLLEENK), 72–105 (GETLKNMAIIYMSNGEEDLSIETYEKALVENPKQ), and 120–153 (GRYAEQNGDLDQRDIWYDKAAEVWSKAVRLYPGG).

It belongs to the Ycf3 family.

It is found in the cellular thylakoid membrane. Functionally, essential for the assembly of the photosystem I (PSI) complex. May act as a chaperone-like factor to guide the assembly of the PSI subunits. This is Photosystem I assembly protein Ycf3 from Prochlorococcus marinus (strain MIT 9215).